We begin with the raw amino-acid sequence, 153 residues long: Vasotocin-neurophysin VT 1 (153 aa).

The N-terminal stretch at 1 to 19 is a signal peptide; that stretch reads MPQCALLLSLLGLLALSSA. A disulfide bridge links Cys20 with Cys25. Position 28 is a glycine amide (Gly28). Disulfide bonds link Cys41/Cys85, Cys44/Cys58, Cys52/Cys75, Cys59/Cys65, Cys92/Cys105, Cys99/Cys117, and Cys106/Cys111.

Belongs to the vasopressin/oxytocin family. In terms of processing, seven disulfide bonds are present in neurophysin.

The protein resides in the secreted. In terms of biological role, vasotocin is probably an antidiuretic hormone. The sequence is that of Vasotocin-neurophysin VT 1 from Takifugu rubripes (Japanese pufferfish).